A 241-amino-acid chain; its full sequence is MSEGLNVGIVVFPGSNCDRDVAYVTREILQWPTQLLWHEETDLGDYDLIVLPGGFSFGDYLRCGAIARFSPIMAAVKDHAAAGKWVLGICNGFQILTEAKLLPGALVRNRDLHFICDRVHLRLEAKERPWLRAYGDKTVIRLPIAHGEGCYYADATTLAELEANRQVLFRYADAQGNVTPESNPNGSLNNIAGICNAAGNVLGMMPHPERAADPALSHSPSEHTLDGLQLFQSLLLASAFA.

The Glutamine amidotransferase type-1 domain occupies asparagine 6–alanine 241. Cysteine 90 functions as the Nucleophile in the catalytic mechanism. Residues histidine 207 and glutamate 209 contribute to the active site.

As to quaternary structure, part of the FGAM synthase complex composed of 1 PurL, 1 PurQ and 2 PurS subunits.

It localises to the cytoplasm. It catalyses the reaction N(2)-formyl-N(1)-(5-phospho-beta-D-ribosyl)glycinamide + L-glutamine + ATP + H2O = 2-formamido-N(1)-(5-O-phospho-beta-D-ribosyl)acetamidine + L-glutamate + ADP + phosphate + H(+). The catalysed reaction is L-glutamine + H2O = L-glutamate + NH4(+). It participates in purine metabolism; IMP biosynthesis via de novo pathway; 5-amino-1-(5-phospho-D-ribosyl)imidazole from N(2)-formyl-N(1)-(5-phospho-D-ribosyl)glycinamide: step 1/2. Part of the phosphoribosylformylglycinamidine synthase complex involved in the purines biosynthetic pathway. Catalyzes the ATP-dependent conversion of formylglycinamide ribonucleotide (FGAR) and glutamine to yield formylglycinamidine ribonucleotide (FGAM) and glutamate. The FGAM synthase complex is composed of three subunits. PurQ produces an ammonia molecule by converting glutamine to glutamate. PurL transfers the ammonia molecule to FGAR to form FGAM in an ATP-dependent manner. PurS interacts with PurQ and PurL and is thought to assist in the transfer of the ammonia molecule from PurQ to PurL. The protein is Phosphoribosylformylglycinamidine synthase subunit PurQ of Thermosynechococcus vestitus (strain NIES-2133 / IAM M-273 / BP-1).